A 269-amino-acid chain; its full sequence is 4-hydroxy-tetrahydrodipicolinate reductase (269 aa).

Residues Gly8 to Met13 and Glu34 contribute to the NAD(+) site. Arg35 lines the NADP(+) pocket. NAD(+)-binding positions include Gly98 to Thr100 and Ala122 to Tyr125. Residue His155 is the Proton donor/acceptor of the active site. His156 contacts (S)-2,3,4,5-tetrahydrodipicolinate. Catalysis depends on Lys159, which acts as the Proton donor. Gly165 to Thr166 contributes to the (S)-2,3,4,5-tetrahydrodipicolinate binding site.

The protein belongs to the DapB family.

Its subcellular location is the cytoplasm. The enzyme catalyses (S)-2,3,4,5-tetrahydrodipicolinate + NAD(+) + H2O = (2S,4S)-4-hydroxy-2,3,4,5-tetrahydrodipicolinate + NADH + H(+). It carries out the reaction (S)-2,3,4,5-tetrahydrodipicolinate + NADP(+) + H2O = (2S,4S)-4-hydroxy-2,3,4,5-tetrahydrodipicolinate + NADPH + H(+). The protein operates within amino-acid biosynthesis; L-lysine biosynthesis via DAP pathway; (S)-tetrahydrodipicolinate from L-aspartate: step 4/4. Functionally, catalyzes the conversion of 4-hydroxy-tetrahydrodipicolinate (HTPA) to tetrahydrodipicolinate. This chain is 4-hydroxy-tetrahydrodipicolinate reductase, found in Vibrio vulnificus (strain CMCP6).